A 457-amino-acid polypeptide reads, in one-letter code: Multidrug resistance protein MdtK (457 aa).

The next 12 helical transmembrane spans lie at 11-31, 53-73, 93-113, 127-147, 160-180, 191-211, 243-263, 276-296, 316-336, 350-370, 387-407, and 418-438; these read LLAL…MGFV, IWLP…PVVA, WLAG…GYII, AVGY…FQVA, GMVM…IFIY, VGCG…MLWW, LPIA…ALLV, IALN…AAVT, RTGV…TVLM, VVLL…SDSI, IFFI…YLLA, and PAGF…MMML.

This sequence belongs to the multi antimicrobial extrusion (MATE) (TC 2.A.66.1) family. MdtK subfamily.

The protein localises to the cell inner membrane. Multidrug efflux pump that functions probably as a Na(+)/drug antiporter. The polypeptide is Multidrug resistance protein MdtK (Klebsiella pneumoniae (strain 342)).